The sequence spans 93 residues: UPF0250 protein PSPA7_1111 (93 aa).

It belongs to the UPF0250 family.

This is UPF0250 protein PSPA7_1111 from Pseudomonas paraeruginosa (strain DSM 24068 / PA7) (Pseudomonas aeruginosa (strain PA7)).